The chain runs to 282 residues: NAD-dependent protein deacetylase 1 (282 aa).

The Deacetylase sirtuin-type domain maps to 1–282 (MTVGRAESPE…ADELSPLPTH (282 aa)). NAD(+) is bound by residues 25 to 45 (GAGI…SPPS) and 101 to 104 (QNVD). Catalysis depends on histidine 119, which acts as the Proton acceptor. Zn(2+) contacts are provided by cysteine 127, cysteine 130, cysteine 181, and cysteine 184. NAD(+) is bound by residues 221-223 (GSS), 247-249 (NRG), and cysteine 265.

It belongs to the sirtuin family. Class II subfamily. The cofactor is Zn(2+).

It is found in the cytoplasm. The enzyme catalyses N(6)-acetyl-L-lysyl-[protein] + NAD(+) + H2O = 2''-O-acetyl-ADP-D-ribose + nicotinamide + L-lysyl-[protein]. In terms of biological role, NAD-dependent protein deacetylase which modulates the activities of several enzymes which are inactive in their acetylated form. In Mycobacterium avium (strain 104), this protein is NAD-dependent protein deacetylase 1.